The following is a 246-amino-acid chain: Neurotrophic factor BDNF precursor form (246 aa).

The signal sequence occupies residues 1-18 (MTILFLTMVISYFSCMKA). A propeptide spanning residues 19-127 (APMKEASVRG…AANMSMRVRR (109 aa)) is cleaved from the precursor. The N-linked (GlcNAc...) asparagine glycan is linked to Asn120. 3 disulfide bridges follow: Cys140-Cys207, Cys185-Cys236, and Cys195-Cys238.

The protein belongs to the NGF-beta family.

The protein resides in the secreted. Its function is as follows. Important signaling molecule that activates signaling cascades downstream of NTRK2. During development, promotes the survival and differentiation of selected neuronal populations of the peripheral and central nervous systems. Participates in axonal growth, pathfinding and in the modulation of dendritic growth and morphology. Major regulator of synaptic transmission and plasticity at adult synapses in many regions of the CNS. The versatility of BDNF is emphasized by its contribution to a range of adaptive neuronal responses including long-term potentiation (LTP), long-term depression (LTD), certain forms of short-term synaptic plasticity, as well as homeostatic regulation of intrinsic neuronal excitability. This Gallus gallus (Chicken) protein is Neurotrophic factor BDNF precursor form (BDNF).